The following is a 1449-amino-acid chain: Gag-Pol polyprotein (1449 aa).

G2 carries N-myristoyl glycine; by host lipidation. An interaction with Gp41 region spans residues V7–M31. The interval L8–R43 is interaction with host CALM1. The interval K12–I19 is interaction with host AP3D1. Residues D14 to H33 form an interaction with membrane phosphatidylinositol 4,5-bisphosphate and RNA region. The Nuclear export signal signature appears at W16–R22. A Nuclear localization signal motif is present at residues K26–K32. Residues E73–S77 are interaction with membrane phosphatidylinositol 4,5-bisphosphate. At Y134 the chain carries Phosphotyrosine; by host. Residues N191–Q229 are interaction with human PPIA/CYPA and NUP153. A dimerization/Multimerization of capsid protein p24 region spans residues Y279–L365. 2 CCHC-type zinc fingers span residues I393–A410 and G414–N431. Residues E447–H461 show a composition bias toward basic and acidic residues. The disordered stretch occupies residues E447–R489. The tract at residues P499–L503 is dimerization of protease. In terms of domain architecture, Peptidase A2 spans R518–L587. Catalysis depends on D523, which acts as the For protease activity; shared with dimeric partner. Dimerization of protease stretches follow at residues G547–K553 and N586–P598. One can recognise a Reverse transcriptase domain in the interval E641 to L831. Positions 707, 782, and 783 each coordinate Mg(2+). The tract at residues F824–H832 is RT 'primer grip'. Positions W995–W1011 match the Tryptophan repeat motif motif. In terms of domain architecture, RNase H type-1 spans I1031–R1154. Positions 1040, 1075, 1095, and 1146 each coordinate Mg(2+). The Integrase-type zinc finger occupies D1160–Q1201. Residues H1169, H1173, C1197, and C1200 each coordinate Zn(2+). Positions V1211–I1361 constitute an Integrase catalytic domain. The Mg(2+) site is built by D1221, D1273, and E1309. The integrase-type DNA-binding region spans F1380–D1427.

As to quaternary structure, homotrimer; further assembles as hexamers of trimers. Interacts with gp41 (via C-terminus). Interacts with host CALM1; this interaction induces a conformational change in the Matrix protein, triggering exposure of the myristate group. Interacts with host AP3D1; this interaction allows the polyprotein trafficking to multivesicular bodies during virus assembly. Part of the pre-integration complex (PIC) which is composed of viral genome, matrix protein, Vpr and integrase. Homodimer; the homodimer further multimerizes as homohexamers or homopentamers. Interacts with human PPIA/CYPA; This interaction stabilizes the capsid. Interacts with human NUP153. Interacts with host PDZD8; this interaction stabilizes the capsid. Interacts with monkey TRIM5; this interaction destabilizes the capsid. In terms of assembly, homodimer, whose active site consists of two apposed aspartic acid residues. As to quaternary structure, heterodimer of p66 RT and p51 RT (RT p66/p51). Heterodimerization of RT is essential for DNA polymerase activity. The overall folding of the subdomains is similar in p66 RT and p51 RT but the spatial arrangements of the subdomains are dramatically different. Homotetramer; may further associate as a homohexadecamer. Part of the pre-integration complex (PIC) which is composed of viral genome, matrix protein, Vpr and integrase. Interacts with human SMARCB1/INI1 and human PSIP1/LEDGF isoform 1. Interacts with human KPNA3; this interaction might play a role in nuclear import of the pre-integration complex. Interacts with human NUP153; this interaction might play a role in nuclear import of the pre-integration complex. Mg(2+) serves as cofactor. Post-translationally, specific enzymatic cleavages by the viral protease yield mature proteins. The protease is released by autocatalytic cleavage. The polyprotein is cleaved during and after budding, this process is termed maturation. Proteolytic cleavage of p66 RT removes the RNase H domain to yield the p51 RT subunit. Nucleocapsid protein p7 might be further cleaved after virus entry. Tyrosine phosphorylated presumably in the virion by a host kinase. Phosphorylation is apparently not a major regulator of membrane association. In terms of processing, phosphorylated possibly by host MAPK1; this phosphorylation is necessary for Pin1-mediated virion uncoating. Post-translationally, methylated by host PRMT6, impairing its function by reducing RNA annealing and the initiation of reverse transcription.

The protein localises to the host cell membrane. It is found in the host endosome. Its subcellular location is the host multivesicular body. It localises to the virion membrane. The protein resides in the host nucleus. The protein localises to the host cytoplasm. It is found in the virion. It carries out the reaction Specific for a P1 residue that is hydrophobic, and P1' variable, but often Pro.. The catalysed reaction is Endohydrolysis of RNA in RNA/DNA hybrids. Three different cleavage modes: 1. sequence-specific internal cleavage of RNA. Human immunodeficiency virus type 1 and Moloney murine leukemia virus enzymes prefer to cleave the RNA strand one nucleotide away from the RNA-DNA junction. 2. RNA 5'-end directed cleavage 13-19 nucleotides from the RNA end. 3. DNA 3'-end directed cleavage 15-20 nucleotides away from the primer terminus.. The enzyme catalyses 3'-end directed exonucleolytic cleavage of viral RNA-DNA hybrid.. It catalyses the reaction DNA(n) + a 2'-deoxyribonucleoside 5'-triphosphate = DNA(n+1) + diphosphate. Protease: The viral protease is inhibited by many synthetic protease inhibitors (PIs), such as amprenavir, atazanavir, indinavir, loprinavir, nelfinavir, ritonavir and saquinavir. Use of protease inhibitors in tritherapy regimens permit more ambitious therapeutic strategies. Reverse transcriptase/ribonuclease H: RT can be inhibited either by nucleoside RT inhibitors (NRTIs) or by non nucleoside RT inhibitors (NNRTIs). NRTIs act as chain terminators, whereas NNRTIs inhibit DNA polymerization by binding a small hydrophobic pocket near the RT active site and inducing an allosteric change in this region. Classical NRTIs are abacavir, adefovir (PMEA), didanosine (ddI), lamivudine (3TC), stavudine (d4T), tenofovir (PMPA), zalcitabine (ddC), and zidovudine (AZT). Classical NNRTIs are atevirdine (BHAP U-87201E), delavirdine, efavirenz (DMP-266), emivirine (I-EBU), and nevirapine (BI-RG-587). The tritherapies used as a basic effective treatment of AIDS associate two NRTIs and one NNRTI. Its function is as follows. Mediates, with Gag polyprotein, the essential events in virion assembly, including binding the plasma membrane, making the protein-protein interactions necessary to create spherical particles, recruiting the viral Env proteins, and packaging the genomic RNA via direct interactions with the RNA packaging sequence (Psi). Gag-Pol polyprotein may regulate its own translation, by the binding genomic RNA in the 5'-UTR. At low concentration, the polyprotein would promote translation, whereas at high concentration, the polyprotein would encapsidate genomic RNA and then shut off translation. In terms of biological role, targets the polyprotein to the plasma membrane via a multipartite membrane-binding signal, that includes its myristoylated N-terminus. Matrix protein is part of the pre-integration complex. Implicated in the release from host cell mediated by Vpu. Binds to RNA. Functionally, forms the conical core that encapsulates the genomic RNA-nucleocapsid complex in the virion. Most core are conical, with only 7% tubular. The core is constituted by capsid protein hexamer subunits. The core is disassembled soon after virion entry. Host restriction factors such as TRIM5-alpha or TRIMCyp bind retroviral capsids and cause premature capsid disassembly, leading to blocks in reverse transcription. Capsid restriction by TRIM5 is one of the factors which restricts HIV-1 to the human species. Host PIN1 apparently facilitates the virion uncoating. On the other hand, interactions with PDZD8 or CYPA stabilize the capsid. Encapsulates and protects viral dimeric unspliced genomic RNA (gRNA). Binds these RNAs through its zinc fingers. Acts as a nucleic acid chaperone which is involved in rearangement of nucleic acid secondary structure during gRNA retrotranscription. Also facilitates template switch leading to recombination. As part of the polyprotein, participates in gRNA dimerization, packaging, tRNA incorporation and virion assembly. Its function is as follows. Aspartyl protease that mediates proteolytic cleavages of Gag and Gag-Pol polyproteins during or shortly after the release of the virion from the plasma membrane. Cleavages take place as an ordered, step-wise cascade to yield mature proteins. This process is called maturation. Displays maximal activity during the budding process just prior to particle release from the cell. Also cleaves Nef and Vif, probably concomitantly with viral structural proteins on maturation of virus particles. Hydrolyzes host EIF4GI and PABP1 in order to shut off the capped cellular mRNA translation. The resulting inhibition of cellular protein synthesis serves to ensure maximal viral gene expression and to evade host immune response. Also mediates cleavage of host YTHDF3. Mediates cleavage of host CARD8, thereby activating the CARD8 inflammasome, leading to the clearance of latent HIV-1 in patient CD4(+) T-cells after viral reactivation; in contrast, HIV-1 can evade CARD8-sensing when its protease remains inactive in infected cells prior to viral budding. In terms of biological role, multifunctional enzyme that converts the viral RNA genome into dsDNA in the cytoplasm, shortly after virus entry into the cell. This enzyme displays a DNA polymerase activity that can copy either DNA or RNA templates, and a ribonuclease H (RNase H) activity that cleaves the RNA strand of RNA-DNA heteroduplexes in a partially processive 3' to 5' endonucleasic mode. Conversion of viral genomic RNA into dsDNA requires many steps. A tRNA(3)-Lys binds to the primer-binding site (PBS) situated at the 5'-end of the viral RNA. RT uses the 3' end of the tRNA primer to perform a short round of RNA-dependent minus-strand DNA synthesis. The reading proceeds through the U5 region and ends after the repeated (R) region which is present at both ends of viral RNA. The portion of the RNA-DNA heteroduplex is digested by the RNase H, resulting in a ssDNA product attached to the tRNA primer. This ssDNA/tRNA hybridizes with the identical R region situated at the 3' end of viral RNA. This template exchange, known as minus-strand DNA strong stop transfer, can be either intra- or intermolecular. RT uses the 3' end of this newly synthesized short ssDNA to perform the RNA-dependent minus-strand DNA synthesis of the whole template. RNase H digests the RNA template except for two polypurine tracts (PPTs) situated at the 5'-end and near the center of the genome. It is not clear if both polymerase and RNase H activities are simultaneous. RNase H probably can proceed both in a polymerase-dependent (RNA cut into small fragments by the same RT performing DNA synthesis) and a polymerase-independent mode (cleavage of remaining RNA fragments by free RTs). Secondly, RT performs DNA-directed plus-strand DNA synthesis using the PPTs that have not been removed by RNase H as primers. PPTs and tRNA primers are then removed by RNase H. The 3' and 5' ssDNA PBS regions hybridize to form a circular dsDNA intermediate. Strand displacement synthesis by RT to the PBS and PPT ends produces a blunt ended, linear dsDNA copy of the viral genome that includes long terminal repeats (LTRs) at both ends. Functionally, catalyzes viral DNA integration into the host chromosome, by performing a series of DNA cutting and joining reactions. This enzyme activity takes place after virion entry into a cell and reverse transcription of the RNA genome in dsDNA. The first step in the integration process is 3' processing. This step requires a complex comprising the viral genome, matrix protein, Vpr and integrase. This complex is called the pre-integration complex (PIC). The integrase protein removes 2 nucleotides from each 3' end of the viral DNA, leaving recessed CA OH's at the 3' ends. In the second step, the PIC enters cell nucleus. This process is mediated through integrase and Vpr proteins, and allows the virus to infect a non dividing cell. This ability to enter the nucleus is specific of lentiviruses, other retroviruses cannot and rely on cell division to access cell chromosomes. In the third step, termed strand transfer, the integrase protein joins the previously processed 3' ends to the 5' ends of strands of target cellular DNA at the site of integration. The 5'-ends are produced by integrase-catalyzed staggered cuts, 5 bp apart. A Y-shaped, gapped, recombination intermediate results, with the 5'-ends of the viral DNA strands and the 3' ends of target DNA strands remaining unjoined, flanking a gap of 5 bp. The last step is viral DNA integration into host chromosome. This involves host DNA repair synthesis in which the 5 bp gaps between the unjoined strands are filled in and then ligated. Since this process occurs at both cuts flanking the HIV genome, a 5 bp duplication of host DNA is produced at the ends of HIV-1 integration. Alternatively, Integrase may catalyze the excision of viral DNA just after strand transfer, this is termed disintegration. This is Gag-Pol polyprotein (gag-pol) from Human immunodeficiency virus type 1 group N (isolate YBF30) (HIV-1).